A 256-amino-acid polypeptide reads, in one-letter code: Protein FixA (256 aa).

Belongs to the ETF beta-subunit/FixA family. As to quaternary structure, heterodimer of FixA and FixB.

It participates in amine and polyamine metabolism; carnitine metabolism. Required for anaerobic carnitine reduction. May bring reductant to CaiA. This chain is Protein FixA, found in Escherichia coli O17:K52:H18 (strain UMN026 / ExPEC).